Consider the following 150-residue polypeptide: MTASEIDIRKILKLLPHRYPILLVDRVLEFEPQKRIKTLKNVTINEPYFMGHFPDQPVMPGVMILEALAQSAGLLTFGADMERKEGALYYFVGIDGARFKRVVYPGDQLHLNVTVERYIRGIWKFKASATVDGEVACEAELMCTVKQAEG.

H52 is a catalytic residue.

It belongs to the thioester dehydratase family. FabZ subfamily.

It localises to the cytoplasm. The enzyme catalyses a (3R)-hydroxyacyl-[ACP] = a (2E)-enoyl-[ACP] + H2O. In terms of biological role, involved in unsaturated fatty acids biosynthesis. Catalyzes the dehydration of short chain beta-hydroxyacyl-ACPs and long chain saturated and unsaturated beta-hydroxyacyl-ACPs. The sequence is that of 3-hydroxyacyl-[acyl-carrier-protein] dehydratase FabZ from Cupriavidus metallidurans (strain ATCC 43123 / DSM 2839 / NBRC 102507 / CH34) (Ralstonia metallidurans).